The primary structure comprises 333 residues: NADH-quinone oxidoreductase subunit H (333 aa).

8 helical membrane-spanning segments follow: residues 15–35 (LVIF…FVTY), 88–108 (FILA…TLPF), 117–137 (IGVG…GVVA), 159–179 (ISYE…TGSL), 191–211 (VWYI…AVAE), 250–270 (LFAM…PVMF), 273–293 (FIPG…VLIW), and 313–333 (VLFP…ELFF).

Belongs to the complex I subunit 1 family. As to quaternary structure, NDH-1 is composed of 14 different subunits. Subunits NuoA, H, J, K, L, M, N constitute the membrane sector of the complex.

It localises to the cell membrane. It carries out the reaction a quinone + NADH + 5 H(+)(in) = a quinol + NAD(+) + 4 H(+)(out). Its function is as follows. NDH-1 shuttles electrons from NADH, via FMN and iron-sulfur (Fe-S) centers, to quinones in the respiratory chain. The immediate electron acceptor for the enzyme in this species is believed to be ubiquinone. Couples the redox reaction to proton translocation (for every two electrons transferred, four hydrogen ions are translocated across the cytoplasmic membrane), and thus conserves the redox energy in a proton gradient. This subunit may bind ubiquinone. The protein is NADH-quinone oxidoreductase subunit H of Geobacillus sp. (strain WCH70).